The chain runs to 213 residues: Imidazole glycerol phosphate synthase subunit HisH (213 aa).

One can recognise a Glutamine amidotransferase type-1 domain in the interval 4-211 (NLGVIDYGMG…LHWLHQGAEP (208 aa)). Catalysis depends on cysteine 82, which acts as the Nucleophile. Active-site residues include histidine 186 and glutamate 188.

Heterodimer of HisH and HisF.

The protein localises to the cytoplasm. The enzyme catalyses 5-[(5-phospho-1-deoxy-D-ribulos-1-ylimino)methylamino]-1-(5-phospho-beta-D-ribosyl)imidazole-4-carboxamide + L-glutamine = D-erythro-1-(imidazol-4-yl)glycerol 3-phosphate + 5-amino-1-(5-phospho-beta-D-ribosyl)imidazole-4-carboxamide + L-glutamate + H(+). It catalyses the reaction L-glutamine + H2O = L-glutamate + NH4(+). Its pathway is amino-acid biosynthesis; L-histidine biosynthesis; L-histidine from 5-phospho-alpha-D-ribose 1-diphosphate: step 5/9. Functionally, IGPS catalyzes the conversion of PRFAR and glutamine to IGP, AICAR and glutamate. The HisH subunit catalyzes the hydrolysis of glutamine to glutamate and ammonia as part of the synthesis of IGP and AICAR. The resulting ammonia molecule is channeled to the active site of HisF. The protein is Imidazole glycerol phosphate synthase subunit HisH of Synechococcus sp. (strain CC9902).